The primary structure comprises 476 residues: Lactate utilization protein B (476 aa).

2 4Fe-4S ferredoxin-type domains span residues 304–334 and 353–382; these read GGEFQPILQCIRCAACVNACPVYRHVGGHTY and YDDFKELPYASTLCGACTDACPVKIPLHQL. [4Fe-4S] cluster is bound by residues Cys-313, Cys-316, Cys-319, Cys-323, Cys-366, Cys-369, and Cys-373. The tract at residues 452–476 is disordered; sequence RDFPAPNKNSFRNWMKHRTKGDEES.

Belongs to the LutB/YkgF family.

In terms of biological role, is involved in L-lactate degradation and allows cells to grow with lactate as the sole carbon source. Has probably a role as an electron transporter during oxidation of L-lactate. This chain is Lactate utilization protein B, found in Lysinibacillus sphaericus (strain C3-41).